We begin with the raw amino-acid sequence, 181 residues long: MSDSRLVKISKYLSKYLRHTPDAIGIKLAPGGWVAVDELITACAKNKFPITRQELEAVVESSEKQRFSFDSTGTLIRANQGHSVEVDLQLEPVVPPDELYHGTGHKSVDSIMETGLCKMSRHHVHLSKDIATAQTVGARHGKPVVFAISAAAMHQAGYIFYCSDNGVWLVDRVPPEYLQKI.

Belongs to the KptA/TPT1 family.

In terms of biological role, removes the 2'-phosphate from RNA via an intermediate in which the phosphate is ADP-ribosylated by NAD followed by a presumed transesterification to release the RNA and generate ADP-ribose 1''-2''-cyclic phosphate (APPR&gt;P). May function as an ADP-ribosylase. The polypeptide is Probable RNA 2'-phosphotransferase (Nostoc punctiforme (strain ATCC 29133 / PCC 73102)).